A 241-amino-acid polypeptide reads, in one-letter code: L-aspartate dehydrogenase (241 aa).

NAD(+) contacts are provided by residues 10–11 (NI), aspartate 28, 56–57 (AS), 63–64 (EY), 78–79 (IS), alanine 109, and asparagine 164. Histidine 193 is a catalytic residue.

The protein belongs to the L-aspartate dehydrogenase family. As to quaternary structure, homodimer.

It carries out the reaction L-aspartate + NADP(+) + H2O = oxaloacetate + NH4(+) + NADPH + H(+). The catalysed reaction is L-aspartate + NAD(+) + H2O = oxaloacetate + NH4(+) + NADH + H(+). Its pathway is cofactor biosynthesis; NAD(+) biosynthesis; iminoaspartate from L-aspartate (dehydrogenase route): step 1/1. Its activity is regulated as follows. Competitively inhibited by L-malate and NH(4)(+). Functionally, specifically catalyzes the NAD or NADP-dependent dehydrogenation of L-aspartate to iminoaspartate. Does not show aspartate oxidase activity. Is also able to catalyze the reverse reaction, i.e. the reductive amination of oxaloacetate. The polypeptide is L-aspartate dehydrogenase (Thermotoga maritima (strain ATCC 43589 / DSM 3109 / JCM 10099 / NBRC 100826 / MSB8)).